A 208-amino-acid chain; its full sequence is GTP-binding protein YPTM1 (208 aa).

Residues 15–23, 33–40, 63–67, 121–124, and 151–153 contribute to the GTP site; these read GDSSVGKSC, YVDSYIST, DTAGQ, NKCD, and SAK. Residues 37 to 45 carry the Effector region motif; sequence YISTIGVDF. The segment at 189–208 is disordered; sequence QMKGRPIQQEQQKSSRCCST. The span at 196 to 208 shows a compositional bias: polar residues; the sequence is QQEQQKSSRCCST. S-geranylgeranyl cysteine attachment occurs at residues Cys-205 and Cys-206.

It belongs to the small GTPase superfamily. Rab family. In terms of tissue distribution, low levels in coleoptiles.

It is found in the cell membrane. Protein transport. Probably involved in vesicular traffic. The sequence is that of GTP-binding protein YPTM1 (YPTM1) from Zea mays (Maize).